Reading from the N-terminus, the 523-residue chain is NAD(P)H-quinone oxidoreductase subunit 2 (523 aa).

Helical transmembrane passes span alanine 29–alanine 49, tryptophan 57–tryptophan 77, leucine 94–tryptophan 114, leucine 132–isoleucine 152, leucine 182–leucine 202, proline 221–valine 241, proline 255–leucine 275, leucine 291–glutamine 311, methionine 317–threonine 337, valine 345–phenylalanine 365, leucine 389–glycine 409, leucine 424–isoleucine 444, and valine 477–phenylalanine 497.

The protein belongs to the complex I subunit 2 family. NDH-1 can be composed of about 15 different subunits; different subcomplexes with different compositions have been identified which probably have different functions.

The protein localises to the cellular thylakoid membrane. It catalyses the reaction a plastoquinone + NADH + (n+1) H(+)(in) = a plastoquinol + NAD(+) + n H(+)(out). The enzyme catalyses a plastoquinone + NADPH + (n+1) H(+)(in) = a plastoquinol + NADP(+) + n H(+)(out). Its function is as follows. NDH-1 shuttles electrons from an unknown electron donor, via FMN and iron-sulfur (Fe-S) centers, to quinones in the respiratory and/or the photosynthetic chain. The immediate electron acceptor for the enzyme in this species is believed to be plastoquinone. Couples the redox reaction to proton translocation, and thus conserves the redox energy in a proton gradient. Cyanobacterial NDH-1 also plays a role in inorganic carbon-concentration. The sequence is that of NAD(P)H-quinone oxidoreductase subunit 2 from Synechococcus sp. (strain CC9902).